A 195-amino-acid chain; its full sequence is 22.0 kDa heat shock protein (195 aa).

An N-terminal signal peptide occupies residues 1–21 (MMKHLLSIFFIGALLLGNIKT). The sHSP domain occupies 62–180 (RDTSVALSPA…GPRVVNIAAE (119 aa)). The N-linked (GlcNAc...) asparagine glycan is linked to Asn-160.

It belongs to the small heat shock protein (HSP20) family. May form oligomeric structures.

It is found in the endoplasmic reticulum. In Arabidopsis thaliana (Mouse-ear cress), this protein is 22.0 kDa heat shock protein (HSP22.0).